The sequence spans 445 residues: tRNA-2-methylthio-N(6)-dimethylallyladenosine synthase (445 aa).

Positions 2–117 (QGLYIKSYGC…LPELIVKARK (116 aa)) constitute an MTTase N-terminal domain. [4Fe-4S] cluster is bound by residues cysteine 11, cysteine 47, cysteine 80, cysteine 157, cysteine 161, and cysteine 164. The Radical SAM core domain occupies 143–374 (KNQKVSAFIS…QELVHKQQLE (232 aa)). Positions 377 to 441 (KKMIGETHPV…KNHLTGIIPN (65 aa)) constitute a TRAM domain.

Belongs to the methylthiotransferase family. MiaB subfamily. In terms of assembly, monomer. [4Fe-4S] cluster serves as cofactor.

Its subcellular location is the cytoplasm. The enzyme catalyses N(6)-dimethylallyladenosine(37) in tRNA + (sulfur carrier)-SH + AH2 + 2 S-adenosyl-L-methionine = 2-methylsulfanyl-N(6)-dimethylallyladenosine(37) in tRNA + (sulfur carrier)-H + 5'-deoxyadenosine + L-methionine + A + S-adenosyl-L-homocysteine + 2 H(+). Functionally, catalyzes the methylthiolation of N6-(dimethylallyl)adenosine (i(6)A), leading to the formation of 2-methylthio-N6-(dimethylallyl)adenosine (ms(2)i(6)A) at position 37 in tRNAs that read codons beginning with uridine. The protein is tRNA-2-methylthio-N(6)-dimethylallyladenosine synthase of Ehrlichia ruminantium (strain Welgevonden).